Consider the following 33-residue polypeptide: U1-pseudomyrmecitoxin-Pt1 subunit LS1 (33 aa).

The protein belongs to the myrmexin family. Heterodimer composed of subunit LS1 and subunit SS1 (U1-PSDTX-Pt1b), heterodimer composed of subunit LS1 and SS2 (U1-PSDTX-Pt1b), and heterodimer composed of subunit LS1 and SS3; disulfide-linked. Expressed by the venom gland.

The protein resides in the secreted. In terms of biological role, this heterodimer may have anti-inflammatory properties, since the myrmexin complex (composed of 6 SS-LS heterodimers) inhibits carrageenin-induced edema in a dose-dependent manner (after subcutaneous injection into rats). The polypeptide is U1-pseudomyrmecitoxin-Pt1 subunit LS1 (Pseudomyrmex triplarinus (Ant)).